The following is a 95-amino-acid chain: Aspartyl/glutamyl-tRNA(Asn/Gln) amidotransferase subunit C (95 aa).

It belongs to the GatC family. Heterotrimer of A, B and C subunits.

It carries out the reaction L-glutamyl-tRNA(Gln) + L-glutamine + ATP + H2O = L-glutaminyl-tRNA(Gln) + L-glutamate + ADP + phosphate + H(+). The catalysed reaction is L-aspartyl-tRNA(Asn) + L-glutamine + ATP + H2O = L-asparaginyl-tRNA(Asn) + L-glutamate + ADP + phosphate + 2 H(+). Functionally, allows the formation of correctly charged Asn-tRNA(Asn) or Gln-tRNA(Gln) through the transamidation of misacylated Asp-tRNA(Asn) or Glu-tRNA(Gln) in organisms which lack either or both of asparaginyl-tRNA or glutaminyl-tRNA synthetases. The reaction takes place in the presence of glutamine and ATP through an activated phospho-Asp-tRNA(Asn) or phospho-Glu-tRNA(Gln). The protein is Aspartyl/glutamyl-tRNA(Asn/Gln) amidotransferase subunit C of Methylobacterium sp. (strain 4-46).